We begin with the raw amino-acid sequence, 81 residues long: Conotoxin Eb11.3 (81 aa).

A signal peptide spans 1–23; it reads MMFRLTSVWCLLVIVLLNSAVDG. 4 disulfides stabilise this stretch: Cys27-Cys41, Cys34-Cys48, Cys40-Cys56, and Cys47-Cys62. Leu69 is subject to Leucine amide. The propeptide occupies 73–81; sequence AQYKRFFRR.

The protein belongs to the conotoxin I2 superfamily. Expressed by the venom duct.

It localises to the secreted. In Conus eburneus (Ivory cone), this protein is Conotoxin Eb11.3.